The chain runs to 518 residues: MATLIRSKLSNVATSVSNKSQAKVSGMFARMGFQAATDEEALGFAHCDDLDTEHRQGLQMDILKTEVPTGDAPPEGDIHYQRDGTGLPPSASKDEGLCSELSSSEKPQITAWEAGWNVTNAIQGMFVLGLPYAILHGGYLGLFLIIFAAVVCCYTGKILIACLYEENEDGETVRVRDSYVDIANACCAPRFPKLGGRVVNVAQIIELVMTCILYVVVSGNLMYNSFPNLPISQKSWSIMATAVLLPCAFLKNLKAVSKFSLLCTVAHFVINILVIAYCLSRARDWAWDKVKFYIDVKKFPISIGIIVFSYTSQIFLPSLEGNMQSPREFHCMMNWTHIAACILKGLFALVAYLTWADETKEVITDNLPSTIRAVVNLFLVSKALLSYPLPFFAAVEVLEKSLFQEGARAFFPNCYGGDGRLKSWGLTLRCALVVFTLLMAIYVPHFALLMGLTGSLTGAGLCFLLPSLFHLKLMWRQLLWHQVFFDVSIFVIGSICSVSGFVHSLEGLIEAYAYNIED.

Topologically, residues 1–125 (MATLIRSKLS…WNVTNAIQGM (125 aa)) are cytoplasmic. Residues 126-146 (FVLGLPYAILHGGYLGLFLII) form a helical membrane-spanning segment. At 147-197 (FAAVVCCYTGKILIACLYEENEDGETVRVRDSYVDIANACCAPRFPKLGGR) the chain is on the lumenal, vesicle side. A helical transmembrane segment spans residues 198 to 218 (VVNVAQIIELVMTCILYVVVS). Residues 219-258 (GNLMYNSFPNLPISQKSWSIMATAVLLPCAFLKNLKAVSK) are Cytoplasmic-facing. Residues 259-279 (FSLLCTVAHFVINILVIAYCL) traverse the membrane as a helical segment. Residues 280-298 (SRARDWAWDKVKFYIDVKK) are Lumenal, vesicle-facing. Residues 299–319 (FPISIGIIVFSYTSQIFLPSL) traverse the membrane as a helical segment. Residues 320–334 (EGNMQSPREFHCMMN) lie on the Cytoplasmic side of the membrane. A helical transmembrane segment spans residues 335 to 355 (WTHIAACILKGLFALVAYLTW). The Lumenal, vesicle portion of the chain corresponds to 356 to 376 (ADETKEVITDNLPSTIRAVVN). The helical transmembrane segment at 377–397 (LFLVSKALLSYPLPFFAAVEV) threads the bilayer. At 398–431 (LEKSLFQEGARAFFPNCYGGDGRLKSWGLTLRCA) the chain is on the cytoplasmic side. The helical transmembrane segment at 432–452 (LVVFTLLMAIYVPHFALLMGL) threads the bilayer. Over 453 to 454 (TG) the chain is Lumenal, vesicle. Residues 455–475 (SLTGAGLCFLLPSLFHLKLMW) form a helical membrane-spanning segment. The Cytoplasmic segment spans residues 476–482 (RQLLWHQ). The helical transmembrane segment at 483–503 (VFFDVSIFVIGSICSVSGFVH) threads the bilayer. Residues 504-518 (SLEGLIEAYAYNIED) lie on the Lumenal, vesicle side of the membrane.

It belongs to the amino acid/polyamine transporter 2 family. In terms of tissue distribution, initially expressed in late neurula stages in the anterior spinal cord. By early tailbud stages, expression extends posteriorly along the entire developing spinal cord and appears in the hindbrain. In late tailbud embryos, expressed in the forebrain, midbrain, hindbrain, spinal cord and retina. In swimming tadpoles, expressed in an extended and more intense pattern including interneurons.

The protein resides in the cytoplasmic vesicle membrane. Its subcellular location is the presynapse. It carries out the reaction 4-aminobutanoate(out) + n H(+)(in) = 4-aminobutanoate(in) + n H(+)(out). The enzyme catalyses glycine(out) + n H(+)(in) = glycine(in) + n H(+)(out). It catalyses the reaction beta-alanine(out) + n H(+)(in) = beta-alanine(in) + n H(+)(out). Antiporter that exchanges vesicular protons for cytosolic 4-aminobutanoate or to a lesser extend glycine, thus allowing their secretion from nerve terminals. The transport is equally dependent on the chemical and electrical components of the proton gradient. May also transport beta-alanine. Acidification of GABAergic synaptic vesicles is a prerequisite for 4-aminobutanoate uptake. This is Vesicular inhibitory amino acid transporter from Xenopus laevis (African clawed frog).